A 676-amino-acid chain; its full sequence is Methionine--tRNA ligase (676 aa).

Residues P15–H25 carry the 'HIGH' region motif. Residues C146, C149, C159, and C162 each contribute to the Zn(2+) site. The 'KMSKS' region motif lies at K332–S336. Residue K335 participates in ATP binding. The tRNA-binding domain maps to D575–K676.

The protein belongs to the class-I aminoacyl-tRNA synthetase family. MetG type 1 subfamily. In terms of assembly, homodimer. It depends on Zn(2+) as a cofactor.

Its subcellular location is the cytoplasm. It carries out the reaction tRNA(Met) + L-methionine + ATP = L-methionyl-tRNA(Met) + AMP + diphosphate. Is required not only for elongation of protein synthesis but also for the initiation of all mRNA translation through initiator tRNA(fMet) aminoacylation. The chain is Methionine--tRNA ligase from Shewanella sp. (strain MR-4).